Consider the following 244-residue polypeptide: 14-3-3 protein homolog 1 (244 aa).

It belongs to the 14-3-3 family.

This is 14-3-3 protein homolog 1 from Echinococcus multilocularis (Fox tapeworm).